The sequence spans 592 residues: MASSQLALFSVSDKTGLVEFARNLASLGLSLVASGGTAKAIRDAGLAVRDVSELTGFPEMLGGRVKTLHPAVHAGILARNIPEDAADMARLDFNLIRVVVCNLYPFVKTVASPDVTVEAAVEQIDIGGVTLLRAAAKNHARVTVVCEPEDYGAVAAEMQGSGNKDTSLETRRHLALKAFTHTAQYDEAISDYFRRQYSKGISQMPLRYGMNPHQTPAQLYTLKPKLPITVLNGAPGFINLCDALNAWQLVTELRGAVDIPAAASFKHVSPAGAAVGVPLSEDEARVCMVYDLYPTLTPLAIAYARARGADRMSSFGDFVALSDVCDVPTAKIISREVSDGIVAPGYEEEALKILSKKKNGSYCVLQMDQSYKPDENEVRTLFGLRLSQKRNNGVVDKSLFSNIVTKNKDLPESALRDLIVATIAVKYTQSNSVCYAKDGQVIGIGAGQQSRIHCTRLAGDKANSWWLRHHPRVLSMKFKAGVKRAEVSNAIDQYVTGTIGEGEDLVKWKALFEEVPELLTEAEKKEWVDKLSGVSVSSDAFFPFRDNVDRAKRSGVAYIVAPSGSTADKVVIEACDELGIVLAHTDLRLFHH.

At methionine 1 the chain carries N-acetylmethionine. In terms of domain architecture, MGS-like spans 1 to 146; sequence MASSQLALFS…KNHARVTVVC (146 aa). Residues 1–198 form an IMP cyclohydrolase region; the sequence is MASSQLALFS…ISDYFRRQYS (198 aa). Residues 12 to 14, 34 to 37, 64 to 67, 101 to 102, and 125 to 126 each bind IMP; these read SDK, SGGT, RVKT, CN, and DI. Catalysis depends on lysine 137, which acts as the Proton donor/acceptor; for FAICAR cyclization activity. An N6-acetyllysine modification is found at lysine 199. Residues 199 to 592 are AICAR formyltransferase; sequence KGISQMPLRY…AHTDLRLFHH (394 aa). 5-amino-1-(5-phospho-beta-D-ribosyl)imidazole-4-carboxamide is bound by residues 207-208, histidine 267, glycine 316, aspartate 339, asparagine 431, and arginine 451; that span reads RY. The active-site Proton acceptor; for AICAR formyltransferase activity is the histidine 267. Position 452 (isoleucine 452) interacts with (6R)-10-formyltetrahydrofolate. Phenylalanine 541 lines the 5-amino-1-(5-phospho-beta-D-ribosyl)imidazole-4-carboxamide pocket. (6R)-10-formyltetrahydrofolate is bound by residues aspartate 546 and 565-566; that span reads ST. 5-amino-1-(5-phospho-beta-D-ribosyl)imidazole-4-carboxamide is bound at residue arginine 588.

The protein belongs to the PurH family. In terms of assembly, homodimer. Associates with internalized INSR complexes on Golgi/endosomal membranes. Interacts with INSR; ATIC together with PRKAA2/AMPK2 and HACD3/PTPLAD1 is proposed to be part of a signaling network regulating INSR autophosphorylation and endocytosis. As to expression, expressed in liver.

The protein localises to the cytoplasm. Its subcellular location is the cytosol. The enzyme catalyses (6R)-10-formyltetrahydrofolate + 5-amino-1-(5-phospho-beta-D-ribosyl)imidazole-4-carboxamide = 5-formamido-1-(5-phospho-D-ribosyl)imidazole-4-carboxamide + (6S)-5,6,7,8-tetrahydrofolate. It carries out the reaction 10-formyldihydrofolate + 5-amino-1-(5-phospho-beta-D-ribosyl)imidazole-4-carboxamide = 5-formamido-1-(5-phospho-D-ribosyl)imidazole-4-carboxamide + 7,8-dihydrofolate. It catalyses the reaction IMP + H2O = 5-formamido-1-(5-phospho-D-ribosyl)imidazole-4-carboxamide. The protein operates within purine metabolism; IMP biosynthesis via de novo pathway; 5-formamido-1-(5-phospho-D-ribosyl)imidazole-4-carboxamide from 5-amino-1-(5-phospho-D-ribosyl)imidazole-4-carboxamide (10-formyl THF route): step 1/1. It functions in the pathway purine metabolism; IMP biosynthesis via de novo pathway; IMP from 5-formamido-1-(5-phospho-D-ribosyl)imidazole-4-carboxamide: step 1/1. With respect to regulation, AMP and XMP inhibit AICAR formyltransferase activity. Functionally, bifunctional enzyme that catalyzes the last two steps of purine biosynthesis. Acts as a transformylase that incorporates a formyl group to the AMP analog AICAR (5-amino-1-(5-phospho-beta-D-ribosyl)imidazole-4-carboxamide) to produce the intermediate formyl-AICAR (FAICAR). Can use both 10-formyldihydrofolate and 10-formyltetrahydrofolate as the formyl donor in this reaction. Also catalyzes the cyclization of FAICAR to inosine monophosphate (IMP). Promotes insulin receptor/INSR autophosphorylation and is involved in INSR internalization. This Rattus norvegicus (Rat) protein is Bifunctional purine biosynthesis protein ATIC (Atic).